The primary structure comprises 132 residues: Small ribosomal subunit protein uS8 (132 aa).

It belongs to the universal ribosomal protein uS8 family. Part of the 30S ribosomal subunit. Contacts proteins S5 and S12.

Its function is as follows. One of the primary rRNA binding proteins, it binds directly to 16S rRNA central domain where it helps coordinate assembly of the platform of the 30S subunit. This is Small ribosomal subunit protein uS8 from Stenotrophomonas maltophilia (strain R551-3).